A 246-amino-acid polypeptide reads, in one-letter code: Ribonuclease 3 (246 aa).

The region spanning 20-145 is the RNase III domain; that stretch reads FSKLEKILGF…FVGAIYLDRG (126 aa). Glutamate 62 is a binding site for Mg(2+). Residue aspartate 66 is part of the active site. 2 residues coordinate Mg(2+): asparagine 131 and glutamate 134. Residue glutamate 134 is part of the active site. Positions 173–241 constitute a DRBM domain; it reads SYKSLLIEWC…SKRGYFVFQS (69 aa).

It belongs to the ribonuclease III family. In terms of assembly, homodimer. Mg(2+) is required as a cofactor.

Its subcellular location is the cytoplasm. It carries out the reaction Endonucleolytic cleavage to 5'-phosphomonoester.. Functionally, digests double-stranded RNA. Involved in the processing of primary rRNA transcript to yield the immediate precursors to the large and small rRNAs (23S and 16S). Processes some mRNAs, and tRNAs when they are encoded in the rRNA operon. Processes pre-crRNA and tracrRNA of type II CRISPR loci if present in the organism. The sequence is that of Ribonuclease 3 from Flavobacterium psychrophilum (strain ATCC 49511 / DSM 21280 / CIP 103535 / JIP02/86).